We begin with the raw amino-acid sequence, 553 residues long: CTP synthase (553 aa).

Residues 1–270 (MTKYVFVTGG…DELICEELKL (270 aa)) are amidoligase domain. S13 lines the CTP pocket. Residue S13 participates in UTP binding. ATP-binding positions include 14-19 (SLGKGI) and D71. Mg(2+) is bound by residues D71 and E144. Residues 151–153 (DIE), 191–196 (KTKPTQ), and K227 each bind CTP. Residues 191-196 (KTKPTQ) and K227 each bind UTP. In terms of domain architecture, Glutamine amidotransferase type-1 spans 295 to 547 (TIGMVGKYVE…VEAARAHHEA (253 aa)). G356 provides a ligand contact to L-glutamine. C383 (nucleophile; for glutamine hydrolysis) is an active-site residue. Residues 384-387 (LGMQ), E407, and R473 each bind L-glutamine. Active-site residues include H520 and E522.

The protein belongs to the CTP synthase family. Homotetramer.

The catalysed reaction is UTP + L-glutamine + ATP + H2O = CTP + L-glutamate + ADP + phosphate + 2 H(+). It catalyses the reaction L-glutamine + H2O = L-glutamate + NH4(+). The enzyme catalyses UTP + NH4(+) + ATP = CTP + ADP + phosphate + 2 H(+). Its pathway is pyrimidine metabolism; CTP biosynthesis via de novo pathway; CTP from UDP: step 2/2. Allosterically activated by GTP, when glutamine is the substrate; GTP has no effect on the reaction when ammonia is the substrate. The allosteric effector GTP functions by stabilizing the protein conformation that binds the tetrahedral intermediate(s) formed during glutamine hydrolysis. Inhibited by the product CTP, via allosteric rather than competitive inhibition. Its function is as follows. Catalyzes the ATP-dependent amination of UTP to CTP with either L-glutamine or ammonia as the source of nitrogen. Regulates intracellular CTP levels through interactions with the four ribonucleotide triphosphates. The protein is CTP synthase of Paraburkholderia phymatum (strain DSM 17167 / CIP 108236 / LMG 21445 / STM815) (Burkholderia phymatum).